Consider the following 224-residue polypeptide: PHD finger-containing protein 5 (224 aa).

The segment at 31–81 adopts a PHD-type zinc-finger fold; it reads KKPCEVCGSDANELLMMTCFMCRDTREHTYCARVMFQRVPRLWICEECRDF. Zn(2+) is bound by residues Cys34, Cys37, Cys49, Cys52, His58, Cys61, Cys75, and Cys78. The segment at 116-137 is disordered; the sequence is PRTNQVVDNHQDPPIDQTDPSS.

In terms of assembly, interacts directly with AIPP3/BDT1.

Functionally, together with AIPP3/BDT1, cooperates to form a BAH-PHD bivalent histone reader complex able to read histone H3 lysine 27 trimethylation (H3K27me3) histone marks in order to regulate transcription, especially to prevent early flowering; promotes AIPP3/BDT1 binding to H3K27me3. The protein is PHD finger-containing protein 5 of Arabidopsis thaliana (Mouse-ear cress).